We begin with the raw amino-acid sequence, 300 residues long: MLKEKNLKWLSLFTTVLMLFVQIGGALVTKTGSADGCGSSWPLCHGKFVPTHIPKETLIELAHRGVSGLALLSVTWLVILSIKYIGHKKETKFLCYMSIGFIFAQALIGAAAVMWQQNGFVLALHFGISLISFSAVFLLTLLIFEVDQKFDATKLILQPKLRRHTIGLTSFIYFVIYSGALVRHEKASLACSSWPLCRKGAFILPQNFYEWVQMSHRTLAFILFIWLTYVAFHAMRNYAQYRVIKYGYMIAFILICLQVTTGALTIFTAVNLYIALLHALFITLLFGLLCYFILLISRAK.

Over methionine 1–lysine 8 the chain is Cytoplasmic. Residues tryptophan 9–threonine 29 form a helical membrane-spanning segment. The Extracellular portion of the chain corresponds to lysine 30 to arginine 64. A disulfide bond links cysteine 37 and cysteine 44. Residue glutamate 60 is part of the active site. Histidine 63 provides a ligand contact to heme o. Residues glycine 65 to isoleucine 85 form a helical membrane-spanning segment. The Cytoplasmic portion of the chain corresponds to glycine 86–lysine 92. The chain crosses the membrane as a helical span at residues phenylalanine 93 to valine 113. Topologically, residues methionine 114 to alanine 123 are extracellular. A helical membrane pass occupies residues leucine 124–phenylalanine 144. Histidine 125 serves as a coordination point for heme o. The Cytoplasmic segment spans residues glutamate 145 to arginine 163. Residues histidine 164–histidine 184 traverse the membrane as a helical segment. Over glutamate 185 to threonine 218 the chain is Extracellular. A disulfide bridge connects residues cysteine 191 and cysteine 197. Histidine 216 serves as a coordination point for heme b. The helical transmembrane segment at leucine 219–alanine 239 threads the bilayer. Over glutamine 240–methionine 249 the chain is Cytoplasmic. Residues isoleucine 250 to valine 270 form a helical membrane-spanning segment. Residues asparagine 271–alanine 275 lie on the Extracellular side of the membrane. A helical transmembrane segment spans residues leucine 276–isoleucine 296. Position 278 (histidine 278) interacts with heme b. Over serine 297–lysine 300 the chain is Cytoplasmic.

This sequence belongs to the COX15/CtaA family. Type 1 subfamily. As to quaternary structure, interacts with CtaB. Heme b serves as cofactor.

The protein localises to the cell membrane. The catalysed reaction is Fe(II)-heme o + 2 A + H2O = Fe(II)-heme a + 2 AH2. The protein operates within porphyrin-containing compound metabolism; heme A biosynthesis; heme A from heme O: step 1/1. Catalyzes the conversion of heme O to heme A by two successive hydroxylations of the methyl group at C8. The first hydroxylation forms heme I, the second hydroxylation results in an unstable dihydroxymethyl group, which spontaneously dehydrates, resulting in the formyl group of heme A. In Macrococcus caseolyticus (strain JCSC5402) (Macrococcoides caseolyticum), this protein is Heme A synthase.